Consider the following 210-residue polypeptide: T-cell antigen CD7 (210 aa).

The signal sequence occupies residues 1-23; sequence MTQQAVLALLLTLAGILPGPLDA. Positions 24–129 constitute an Ig-like domain; that stretch reads QDVHQSPRLT…RGLFTTVVVK (106 aa). The Extracellular segment spans residues 24–150; the sequence is QDVHQSPRLT…EPLQTSFSFP (127 aa). N-linked (GlcNAc...) asparagine glycans are attached at residues N42, N86, and N93. Residues C45 and C111 are joined by a disulfide bond. Residues 151-171 form a helical membrane-spanning segment; it reads AAIAVGFFFTGLLLGVVCSML. A lipid anchor (S-palmitoyl cysteine) is attached at C168. At 172–210 the chain is on the cytoplasmic side; the sequence is RKIQIKKLCASGIKESPCVVYEDMSYSNRKTPCIPNQYQ.

Interacts with SECTM1.

The protein localises to the membrane. In terms of biological role, transmembrane glycoprotein expressed by T-cells and natural killer (NK) cells and their precursors. Plays a costimulatory role in T-cell activation upon binding to its ligand K12/SECTM1. In turn, mediates the production of cytokines such as IL-2. On resting NK-cells, CD7 activation results in a significant induction of gamma-interferon levels. The sequence is that of T-cell antigen CD7 (Cd7) from Mus musculus (Mouse).